We begin with the raw amino-acid sequence, 178 residues long: ATP-dependent protease subunit HslV (178 aa).

Thr7 is an active-site residue. Positions 162, 165, and 168 each coordinate Na(+).

Belongs to the peptidase T1B family. HslV subfamily. As to quaternary structure, a double ring-shaped homohexamer of HslV is capped on each side by a ring-shaped HslU homohexamer. The assembly of the HslU/HslV complex is dependent on binding of ATP.

The protein localises to the cytoplasm. The catalysed reaction is ATP-dependent cleavage of peptide bonds with broad specificity.. With respect to regulation, allosterically activated by HslU binding. Protease subunit of a proteasome-like degradation complex believed to be a general protein degrading machinery. This is ATP-dependent protease subunit HslV from Cupriavidus pinatubonensis (strain JMP 134 / LMG 1197) (Cupriavidus necator (strain JMP 134)).